The sequence spans 188 residues: UPF0301 protein Mmwyl1_0539 (188 aa).

This sequence belongs to the UPF0301 (AlgH) family.

This Marinomonas sp. (strain MWYL1) protein is UPF0301 protein Mmwyl1_0539.